The following is a 305-amino-acid chain: Dihydroorotate dehydrogenase B (NAD(+)), catalytic subunit (305 aa).

Residues S21 and 45–46 contribute to the FMN site; that span reads KG. Residues K45 and 69-73 contribute to the substrate site; that span reads NAVGL. The FMN site is built by N99 and N127. A substrate-binding site is contributed by N127. The active-site Nucleophile is the C130. K165 and I191 together coordinate FMN. A substrate-binding site is contributed by 192-193; it reads NT. Residues G217, 243 to 244, and 265 to 266 contribute to the FMN site; these read GG and GT.

The protein belongs to the dihydroorotate dehydrogenase family. Type 1 subfamily. In terms of assembly, heterotetramer of 2 PyrK and 2 PyrD type B subunits. It depends on FMN as a cofactor.

The protein resides in the cytoplasm. The enzyme catalyses (S)-dihydroorotate + NAD(+) = orotate + NADH + H(+). The protein operates within pyrimidine metabolism; UMP biosynthesis via de novo pathway; orotate from (S)-dihydroorotate (NAD(+) route): step 1/1. Functionally, catalyzes the conversion of dihydroorotate to orotate with NAD(+) as electron acceptor. The chain is Dihydroorotate dehydrogenase B (NAD(+)), catalytic subunit (pyrD) from Parabacteroides distasonis (strain ATCC 8503 / DSM 20701 / CIP 104284 / JCM 5825 / NCTC 11152).